The primary structure comprises 138 residues: Transcription antitermination protein NusB (138 aa).

This sequence belongs to the NusB family.

Its function is as follows. Involved in transcription antitermination. Required for transcription of ribosomal RNA (rRNA) genes. Binds specifically to the boxA antiterminator sequence of the ribosomal RNA (rrn) operons. The protein is Transcription antitermination protein NusB of Desulforudis audaxviator (strain MP104C).